The following is a 250-amino-acid chain: UDP-2,3-diacylglucosamine hydrolase (250 aa).

Mn(2+) is bound by residues Asp-8, His-10, Asp-41, Asn-79, and His-114. A substrate-binding site is contributed by Asn-79–Arg-80. Positions 122, 160, 167, and 195 each coordinate substrate. The Mn(2+) site is built by His-195 and His-197.

This sequence belongs to the LpxH family. It depends on Mn(2+) as a cofactor.

It is found in the cell inner membrane. It catalyses the reaction UDP-2-N,3-O-bis[(3R)-3-hydroxytetradecanoyl]-alpha-D-glucosamine + H2O = 2-N,3-O-bis[(3R)-3-hydroxytetradecanoyl]-alpha-D-glucosaminyl 1-phosphate + UMP + 2 H(+). Its pathway is glycolipid biosynthesis; lipid IV(A) biosynthesis; lipid IV(A) from (3R)-3-hydroxytetradecanoyl-[acyl-carrier-protein] and UDP-N-acetyl-alpha-D-glucosamine: step 4/6. Its function is as follows. Hydrolyzes the pyrophosphate bond of UDP-2,3-diacylglucosamine to yield 2,3-diacylglucosamine 1-phosphate (lipid X) and UMP by catalyzing the attack of water at the alpha-P atom. Involved in the biosynthesis of lipid A, a phosphorylated glycolipid that anchors the lipopolysaccharide to the outer membrane of the cell. This is UDP-2,3-diacylglucosamine hydrolase from Nitrosococcus oceani (strain ATCC 19707 / BCRC 17464 / JCM 30415 / NCIMB 11848 / C-107).